We begin with the raw amino-acid sequence, 446 residues long: MSNFSRSTRRKFMFTAGAAAIGGVVLHGCTSPTTTSTGTGTGSSTDQAISPLVEGENAPEVTTAKLGFIALTDAAPLIIAKEKGFYAKYGMPDVEVLKQASWGTTRDNLVLGSASGGIDGAHILTPMPYLITMGTVTDGKPTPMYILARLNVNGQGIQLGNNYKDLKVGTDAAPLKEAFAKVTDPKVAMTFPGGTHDMWIRYWLAAGGMEPGKDFSTIVVPPAQMVANVKVNAMESFCVGEPWPLQTVNQGVGYQALTTGQLWKDHPEKAFGMRADWVDQNPKAAKALLMAVMEAQQWCDQAENKEEMCQILSKREWFKVPFEDIIDRSKGIYNFGNGQETFEDQEIMQKYWVDNASYPYKSHDQWFLTENIRWGYLPASTDTKAIVDKVNREDLWREAAQALEVPADQIPSSPSRGIETFFDGITFDPENPQAYLDSLKIKSIKA.

A signal peptide spans 1–28 (MSNFSRSTRRKFMFTAGAAAIGGVVLHG). Cys-29 is lipidated: N-palmitoyl cysteine. Cys-29 is lipidated: S-diacylglycerol cysteine. Trp-102, Gln-155, His-196, Gly-240, and Lys-269 together coordinate nitrate.

This sequence belongs to the CmpA/NrtA family. The complex is composed of two ATP-binding proteins (NrtC and NrtD), two transmembrane proteins (NrtB) and a solute-binding protein (NrtA).

It localises to the cell inner membrane. Part of the ABC transporter complex NrtABCD involved in nitrate uptake. The complex is probably also involved in nitrite transport. NrtA is the substrate-binding protein. Binds nitrate. The chain is Nitrate/nitrite binding protein NrtA from Synechocystis sp. (strain ATCC 27184 / PCC 6803 / Kazusa).